Reading from the N-terminus, the 390-residue chain is tRNA(Met) cytidine acetate ligase (390 aa).

Residues 7-20 (ITEY…HIYH), glycine 101, asparagine 152, and arginine 177 contribute to the ATP site.

This sequence belongs to the TmcAL family.

The protein localises to the cytoplasm. The catalysed reaction is cytidine(34) in elongator tRNA(Met) + acetate + ATP = N(4)-acetylcytidine(34) in elongator tRNA(Met) + AMP + diphosphate. In terms of biological role, catalyzes the formation of N(4)-acetylcytidine (ac(4)C) at the wobble position of elongator tRNA(Met), using acetate and ATP as substrates. First activates an acetate ion to form acetyladenylate (Ac-AMP) and then transfers the acetyl group to tRNA to form ac(4)C34. The sequence is that of tRNA(Met) cytidine acetate ligase from Leuconostoc mesenteroides subsp. mesenteroides (strain ATCC 8293 / DSM 20343 / BCRC 11652 / CCM 1803 / JCM 6124 / NCDO 523 / NBRC 100496 / NCIMB 8023 / NCTC 12954 / NRRL B-1118 / 37Y).